We begin with the raw amino-acid sequence, 327 residues long: Biotin synthase (327 aa).

Residues 48 to 278 (YCGDGVGLCM…DRHITVCGGR (231 aa)) enclose the Radical SAM core domain. The [4Fe-4S] cluster site is built by C66, C70, and C73. Residues S143 and C203 each contribute to the [2Fe-2S] cluster site.

This sequence belongs to the radical SAM superfamily. Biotin synthase family. As to quaternary structure, homodimer. Requires [4Fe-4S] cluster as cofactor. [2Fe-2S] cluster serves as cofactor.

The catalysed reaction is (4R,5S)-dethiobiotin + (sulfur carrier)-SH + 2 reduced [2Fe-2S]-[ferredoxin] + 2 S-adenosyl-L-methionine = (sulfur carrier)-H + biotin + 2 5'-deoxyadenosine + 2 L-methionine + 2 oxidized [2Fe-2S]-[ferredoxin]. Its pathway is cofactor biosynthesis; biotin biosynthesis; biotin from 7,8-diaminononanoate: step 2/2. Catalyzes the conversion of dethiobiotin (DTB) to biotin by the insertion of a sulfur atom into dethiobiotin via a radical-based mechanism. In Syntrophotalea carbinolica (strain DSM 2380 / NBRC 103641 / GraBd1) (Pelobacter carbinolicus), this protein is Biotin synthase.